A 498-amino-acid chain; its full sequence is Myocyte-specific enhancer factor 2D homolog (498 aa).

The interaction with hdac9 stretch occupies residues 1–100; it reads MGRKKIQIQR…KGFNGCDSPE (100 aa). The MADS-box domain maps to 3–57; sequence RKKIQIQRITDERNRQVTFTKRKFGLMKKAYELSVLCDCEIALIIFNHSNKLFQY. The segment at residues 58–86 is a DNA-binding region (mef2-type); the sequence is ASTDMDKVLLKYTEYNEPHESRTNADIIE. Disordered regions lie at residues 173 to 215, 243 to 267, and 411 to 498; these read LTDP…NSNG, LGKV…NSRK, and SIKR…AWVT. The span at 412–424 shows a compositional bias: basic and acidic residues; the sequence is IKREPASPNRERS. Polar residues-rich tracts occupy residues 425–434 and 447–457; these read TGTPLSCFSH and DSLSSNASSFE.

This sequence belongs to the MEF2 family. As to quaternary structure, binds DNA as a multimer, probably as a dimer. Interacts with hdac9. Restricted to the somitic mesoderm of early embryos and to the body muscle (myotomes) of the tadpole. Expressed in all tissues examined in the adult.

It localises to the nucleus. In terms of biological role, may regulate muscle-specific transcription in the embryo and may regulate transcription of a variety of cell types in the adult. It binds to the sequence 5'-CTA[TA]4TAR-3'. The sequence is that of Myocyte-specific enhancer factor 2D homolog (mef2d) from Xenopus laevis (African clawed frog).